Consider the following 92-residue polypeptide: Arrestin-C (92 aa).

The protein belongs to the arrestin family. Homodimer; disulfide-linked in response to retinal illumination. Interacts with CXCR4; the interaction is dependent on the C-terminal phosphorylation of CXCR4 and modulates the calcium ion mobilization activity of CXCR4. Interacts with GPR84. Retina and pineal gland.

It localises to the photoreceptor inner segment. The protein localises to the cell projection. It is found in the cilium. The protein resides in the photoreceptor outer segment. May play a role in an as yet undefined retina-specific signal transduction. Could bind to photoactivated-phosphorylated red/green opsins. The polypeptide is Arrestin-C (Arr3) (Rattus norvegicus (Rat)).